The following is a 1104-amino-acid chain: MSEAVEKIRSHDKYRQFYELATKIRNQKLLADAESASLHRHKQEVADLEVKLLTEAWRSSYWTNVSRQLKSQSLDPSYACRLLKEISDTEALAAYKHFGHHYSTLNQLLTVLYMEPTSVAELLNMWDQNDVTTNDNLIQTFFHLVYSCGLYPDDELKIAQVVCYLLKLQLVKSGSQMRTMLRKETSISTRFYKYFVEQMHPTMVYLTKALRKSVLNVIQLGNFWLDVDMKQSSSRFLSDGRQNSERLPEYRALVVSKLVDFVDNFLENISLALSMLPPNLNWIVRDIFCSLYEIVDDMSAIELSHACKDMIVSNLLCPAIISPQKFGVVDNDVRIGSIVNHNLAQIAMIIQMISLREFESPPEEYREFLSQCRNTHLISEMMDSLLVENMAPDVEITSLIASGKSESDLETKSNFVGSLADANKLIKMIRETPPTTDLKISRIVSVCQKMPESFASTVEKLHVENSEDSPKLSALRNIHRKVQKSFKRTGDSFYDPNELHMKTENYGGVFEKENFDRKLREASEVERRKQEARKQKQLKETELLIMDNISSDSAPITIKASAATNAPIANNNFTENKDLIDFSTLYTTTDDVISIPSEPSKEEKSVEKPNVNNVSVDAPVEALQIGESRGGLAKLKNFSDRMKKGITQSNTLSDIRDHLRRSSSLAKQPSGMVSSASAQNIPDTEKGDSILAKYASNSSIKIEKSTFTKLTDTKSMPKNTEMSEPYYSPENLTSCRAFKDTLRKMITVLGNVSYLPKIGCRSEMKEMSKKVRLDSFLDGVLVETEHRREYGQAAQLREVKRCIELFENEGVEILMDHLVGNEVEQDFLVRQMREERAILMRKSNDISSMEQRVLLNRRLTEQILVDNLIQTFLETGFQNSKLASGKTPEVVAVGKFYSEFKFLQAHDERAEFLQNLLTYLRERLMQNYDWNFATESMIARAMTTMERFVMFAVYEIAFWPNREMDQKKDKLLQSVIGKASSSVTPVHEALKIPEHLLGEAPWPSAQAELSMLDNYVTAQEKLNCLVRCCDVINNLVALSSKNAVASADDLTPVLVFVIIKANPRSLLSNLQFIETFAGDQIESGRDAYYWVNFKSAVEYIKTIL.

The Ras-GAP domain maps to 156–389 (LKIAQVVCYL…EMMDSLLVEN (234 aa)). A disordered region spans residues 663-682 (SSLAKQPSGMVSSASAQNIP). Residues 966-1104 (QKKDKLLQSV…SAVEYIKTIL (139 aa)) enclose the VPS9 domain.

This sequence belongs to the GAPVD1 family. In terms of assembly, interacts with GDP-bound rab-5. Interacts with alpha-adaptin.

Its subcellular location is the membrane. The protein localises to the cytoplasmic vesicle. The protein resides in the clathrin-coated vesicle. Its function is as follows. Acts both as a GTPase-activating protein (GAP) and a guanine nucleotide exchange factor (GEF), and participates in endocytosis. Acts by regulating the activation of rab-5 by exchanging bound GDP for free GTP at clathrin coated pits. In Caenorhabditis briggsae, this protein is Receptor-mediated endocytosis protein 6 (rme-6).